Reading from the N-terminus, the 52-residue chain is uncharacterized protein (52 aa).

The tract at residues leucine 24–alanine 52 is disordered.

This is an uncharacterized protein from Treponema pallidum (strain Nichols).